The primary structure comprises 345 residues: Methionine import ATP-binding protein MetN 4 (345 aa).

The ABC transporter domain occupies 2–241 (IELTNITKTF…PQLRTTKRFV (240 aa)). 38-45 (GYSGAGKS) contributes to the ATP binding site.

Belongs to the ABC transporter superfamily. Methionine importer (TC 3.A.1.24) family. The complex is composed of two ATP-binding proteins (MetN), two transmembrane proteins (MetI) and a solute-binding protein (MetQ).

Its subcellular location is the cell membrane. The catalysed reaction is L-methionine(out) + ATP + H2O = L-methionine(in) + ADP + phosphate + H(+). The enzyme catalyses D-methionine(out) + ATP + H2O = D-methionine(in) + ADP + phosphate + H(+). Part of the ABC transporter complex MetNIQ involved in methionine import. Responsible for energy coupling to the transport system. The polypeptide is Methionine import ATP-binding protein MetN 4 (Oceanobacillus iheyensis (strain DSM 14371 / CIP 107618 / JCM 11309 / KCTC 3954 / HTE831)).